The sequence spans 253 residues: Protein phosphatase CheZ (253 aa).

Residues 1–84 form a disordered region; the sequence is MTQEELDALM…EWPPPPPTEE (84 aa). Residues 21-69 are compositionally biased toward basic and acidic residues; that stretch reads LETKEETKEEAKEEAKEEAKEEAKEKEEIKEESSSQKMTVKKEDAEKYG.

The protein belongs to the CheZ family. Interacts with ChePep; this interaction is essential for each other polar localization.

It is found in the cytoplasm. In terms of biological role, plays an important role in bacterial chemotaxis signal transduction pathway by accelerating the dephosphorylation of phosphorylated CheY (CheY-P). Also dephosphorylates CheV2 but not CheV1 or CheV3. In addition, forms a distinct chemotaxis regulatory complex with ChePep independently of the core chemotaxis signaling proteins. This is Protein phosphatase CheZ from Helicobacter pylori (strain ATCC 700392 / 26695) (Campylobacter pylori).